The sequence spans 1367 residues: Dynactin, 150 kDa isoform (1367 aa).

Residues 28–70 (GETAFAPGTWVGIELDEPSGKNDGSVQGERYFNCEMGYGMFVR) form the CAP-Gly domain. Positions 76–318 (VIAQPPPPPP…NLKATTITPR (243 aa)) are disordered. 2 stretches are compositionally biased toward low complexity: residues 88 to 99 (TFRRSVTTRPTS) and 132 to 149 (PSRT…RSPT). Residues 150–163 (KQLATASSSGNPSR) are compositionally biased toward polar residues. 2 stretches are compositionally biased toward low complexity: residues 164 to 190 (SGTP…SRHS) and 243 to 259 (STGS…KRGS). 3 coiled-coil regions span residues 321 to 598 (ITNT…MQEE), 637 to 698 (LQSD…EAEQ), and 1039 to 1199 (AELK…RARL).

It belongs to the dynactin 150 kDa subunit family. In terms of assembly, large macromolecular complex of at least 10 components; p150(glued) binds directly to microtubules and to cytoplasmic dynein.

Its subcellular location is the cytoplasm. It localises to the cytoskeleton. Required for the cytoplasmic dynein-driven retrograde movement of vesicles and organelles along microtubules. Dynein-dynactin interaction is a key component of the mechanism of axonal transport of vesicles and organelles. This Neurospora crassa (strain ATCC 24698 / 74-OR23-1A / CBS 708.71 / DSM 1257 / FGSC 987) protein is Dynactin, 150 kDa isoform (ro-3).